We begin with the raw amino-acid sequence, 132 residues long: Large ribosomal subunit protein bL17 (132 aa).

This sequence belongs to the bacterial ribosomal protein bL17 family. In terms of assembly, part of the 50S ribosomal subunit. Contacts protein L32.

The sequence is that of Large ribosomal subunit protein bL17 from Ralstonia pickettii (strain 12J).